Reading from the N-terminus, the 388-residue chain is Succinate--CoA ligase [ADP-forming] subunit beta (388 aa).

In terms of domain architecture, ATP-grasp spans 9-244; the sequence is KEIFRSMGVA…LEEEDPKEIE (236 aa). ATP is bound by residues Lys46, 53 to 55, Glu99, Cys102, and Glu107; that span reads GRG. Mg(2+)-binding residues include Asn199 and Asp213. Substrate is bound by residues Asn264 and 321 to 323; that span reads GIM.

Belongs to the succinate/malate CoA ligase beta subunit family. As to quaternary structure, heterotetramer of two alpha and two beta subunits. The cofactor is Mg(2+).

The catalysed reaction is succinate + ATP + CoA = succinyl-CoA + ADP + phosphate. It carries out the reaction GTP + succinate + CoA = succinyl-CoA + GDP + phosphate. Its pathway is carbohydrate metabolism; tricarboxylic acid cycle; succinate from succinyl-CoA (ligase route): step 1/1. In terms of biological role, succinyl-CoA synthetase functions in the citric acid cycle (TCA), coupling the hydrolysis of succinyl-CoA to the synthesis of either ATP or GTP and thus represents the only step of substrate-level phosphorylation in the TCA. The beta subunit provides nucleotide specificity of the enzyme and binds the substrate succinate, while the binding sites for coenzyme A and phosphate are found in the alpha subunit. The polypeptide is Succinate--CoA ligase [ADP-forming] subunit beta (Staphylococcus haemolyticus (strain JCSC1435)).